Reading from the N-terminus, the 290-residue chain is Probable prolyl 4-hydroxylase 8 (290 aa).

At 1–19 (MAKKPKQLRNKPRKSFSTQ) the chain is on the cytoplasmic side. A helical; Signal-anchor for type II membrane protein transmembrane segment spans residues 20 to 40 (TFTVVVLVLFVILILVGLGIF). Over 41–290 (SLPSTNKTSS…TKWFHVHEYN (250 aa)) the chain is Lumenal. Residue Asn46 is glycosylated (N-linked (GlcNAc...) asparagine). One can recognise a Fe2OG dioxygenase domain in the interval 163 to 286 (NGEGLQVLHY…KWSSTKWFHV (124 aa)). Fe cation-binding residues include His181 and Asp183. Residue Asn222 is glycosylated (N-linked (GlcNAc...) asparagine). His267 is a Fe cation binding site. Lys277 serves as a coordination point for 2-oxoglutarate.

Belongs to the P4HA family. The cofactor is Fe(2+). It depends on L-ascorbate as a cofactor.

Its subcellular location is the endoplasmic reticulum membrane. The enzyme catalyses L-prolyl-[collagen] + 2-oxoglutarate + O2 = trans-4-hydroxy-L-prolyl-[collagen] + succinate + CO2. Its function is as follows. Catalyzes the post-translational formation of 4-hydroxyproline in -Xaa-Pro-Gly- sequences in proline-rich peptide sequences of plant glycoproteins and other proteins. Hydroxyprolines are important constituent of many plant cell wall glycoproteins such as extensins, hydroxyproline-rich glycoproteins, lectins and arabinogalactan proteins. This chain is Probable prolyl 4-hydroxylase 8, found in Arabidopsis thaliana (Mouse-ear cress).